Here is a 315-residue protein sequence, read N- to C-terminus: MTTNNFSHTSVLLDEAVNGLNIKPSGIYIDGTFGRGGHSRLILSQLGEQGRLIAIDRDPQAIAVANEIDDPRFSIIHGPFSNIEHYINELGLSGKVDGVLLDLGVSSPQLDDPERGFSFMRDGPLDMRMDPTTGQSAAQWLMNAEEDDITWVLKTFGEERFAKRIARAIVARNKTEEPLTRTKQLADLISEASPVKERHKHPATRSFQAIRIYINSELDEIEKALKGAVSILAPAGRLSVISFHSLEDRLVKRFIRDESKGPVVPAGIPLTEEQIKALGSARLSSIHKMKPTGVEVEENPRARSSVLRVAQRIEE.

Residues 36–38, Asp56, Phe80, Asp102, and Gln109 each bind S-adenosyl-L-methionine; that span reads GGH.

It belongs to the methyltransferase superfamily. RsmH family.

The protein localises to the cytoplasm. The enzyme catalyses cytidine(1402) in 16S rRNA + S-adenosyl-L-methionine = N(4)-methylcytidine(1402) in 16S rRNA + S-adenosyl-L-homocysteine + H(+). Functionally, specifically methylates the N4 position of cytidine in position 1402 (C1402) of 16S rRNA. The protein is Ribosomal RNA small subunit methyltransferase H of Proteus mirabilis (strain HI4320).